The sequence spans 300 residues: MCSKTSSVSYGNREDDDNYSSLCPKKQKHNNGGKKRVPRRGPGVAELEKIRLGEQHISTAAPFTLHHPPSLEKSPTITDRTGLVYPFSSYFSAGSFPSDLIPPAPVFQRKHDSSLHYLPPMNLPKQGSGGFYQFIEPPSSQTSSLDNVTKFLDEEKISSAKRPWHFMADTAKCSVGPSTTISRDAKQTRSLDLRLKNHVQDSGTTIRNPITIDSPSSASPPTTIFANPSLGFPRFLQKEEDDHEIIQRKSGTNFPLNKKPFYSFLPANDQIIRDQDRSFSLRTERYDTVPDHGIDLRLKL.

Residues 1-10 (MCSKTSSVSY) are compositionally biased toward polar residues. Residues 1–45 (MCSKTSSVSYGNREDDDNYSSLCPKKQKHNNGGKKRVPRRGPGVA) are disordered. The segment covering 25–39 (KKQKHNNGGKKRVPR) has biased composition (basic residues). An SPL motif is present at residues 40–48 (RGPGVAELE). An EAR motif is present at residues 294–300 (IDLRLKL).

Interacts with SPL and SPEAR2. Expressed in leaves.

Adapter-like transcriptional repressor recruiting TPL/TPR coepressors to inhibit TCP transcription factors. May be involved in leaf development. This Arabidopsis thaliana (Mouse-ear cress) protein is Protein SPEAR4.